We begin with the raw amino-acid sequence, 226 residues long: ATP synthase subunit a (226 aa).

5 helical membrane-spanning segments follow: residues 20–40 (LNWL…WLLP), 74–94 (FISL…PYIF), 100–120 (LTLT…YGWI), 158–180 (LAVR…GNTG), and 197–217 (IALL…FAVL).

Belongs to the ATPase A chain family. As to quaternary structure, F-type ATPases have 2 components, CF(1) - the catalytic core - and CF(0) - the membrane proton channel. CF(1) has five subunits: alpha(3), beta(3), gamma(1), delta(1), epsilon(1). CF(0) has three main subunits: a, b and c.

The protein resides in the mitochondrion inner membrane. Functionally, mitochondrial membrane ATP synthase (F(1)F(0) ATP synthase or Complex V) produces ATP from ADP in the presence of a proton gradient across the membrane which is generated by electron transport complexes of the respiratory chain. F-type ATPases consist of two structural domains, F(1) - containing the extramembraneous catalytic core and F(0) - containing the membrane proton channel, linked together by a central stalk and a peripheral stalk. During catalysis, ATP synthesis in the catalytic domain of F(1) is coupled via a rotary mechanism of the central stalk subunits to proton translocation. Key component of the proton channel; it may play a direct role in the translocation of protons across the membrane. This Anopheles quadrimaculatus (Common malaria mosquito) protein is ATP synthase subunit a (ATP6).